Consider the following 144-residue polypeptide: Peptidyl-Asp metalloendopeptidase (144 aa).

Residue H64 coordinates Zn(2+). The active site involves E65. H68 serves as a coordination point for Zn(2+).

The protein belongs to the peptidase M72 family. The cofactor is Zn(2+).

It carries out the reaction Cleavage of Xaa-|-Asp, Xaa-|-Glu and Xaa-|-cysteic acid bonds.. Functionally, metalloprotease, specifically cleaves on the N-terminal side of aspartyl, glutamyl and cysteic acid residues. The sequence is that of Peptidyl-Asp metalloendopeptidase from Pseudomonas fragi.